We begin with the raw amino-acid sequence, 353 residues long: tRNA-specific 2-thiouridylase MnmA (353 aa).

ATP contacts are provided by residues 6–13 (GMSGGVDS) and Leu32. Cys99 (nucleophile) is an active-site residue. The cysteines at positions 99 and 197 are disulfide-linked. Gly124 provides a ligand contact to ATP. Positions 147–149 (KDQ) are interaction with tRNA. Cys197 serves as the catalytic Cysteine persulfide intermediate. Residues 303–304 (RY) form an interaction with tRNA region.

Belongs to the MnmA/TRMU family.

Its subcellular location is the cytoplasm. The catalysed reaction is S-sulfanyl-L-cysteinyl-[protein] + uridine(34) in tRNA + AH2 + ATP = 2-thiouridine(34) in tRNA + L-cysteinyl-[protein] + A + AMP + diphosphate + H(+). In terms of biological role, catalyzes the 2-thiolation of uridine at the wobble position (U34) of tRNA, leading to the formation of s(2)U34. This Persephonella marina (strain DSM 14350 / EX-H1) protein is tRNA-specific 2-thiouridylase MnmA.